Reading from the N-terminus, the 201-residue chain is CASP-like protein 2D1 (201 aa).

Over Met1–Arg26 the chain is Cytoplasmic. The chain crosses the membrane as a helical span at residues Leu27 to Met47. Over Ala48–Tyr70 the chain is Extracellular. The helical transmembrane segment at Leu71–Cys91 threads the bilayer. Residues Arg92 to Asp98 lie on the Cytoplasmic side of the membrane. Residues Trp99 to Ala119 traverse the membrane as a helical segment. Over Ala120–Ala148 the chain is Extracellular. A helical membrane pass occupies residues Ala149–Ile169. Residues Ser170 to Gly201 are Cytoplasmic-facing. The span at Pro180–Gln194 shows a compositional bias: polar residues. The interval Pro180–Gly201 is disordered.

Belongs to the Casparian strip membrane proteins (CASP) family. Homodimer and heterodimers.

The protein resides in the cell membrane. The chain is CASP-like protein 2D1 from Oryza sativa subsp. indica (Rice).